The sequence spans 706 residues: Elongation factor G (706 aa).

Positions 8–295 constitute a tr-type G domain; the sequence is ELYRNFGIMA…AVIDYLPSPL (288 aa). Residues 17–24, 92–96, and 146–149 each bind GTP; these read AHIDAGKT, DTPGH, and NKMD.

It belongs to the TRAFAC class translation factor GTPase superfamily. Classic translation factor GTPase family. EF-G/EF-2 subfamily.

It localises to the cytoplasm. Its function is as follows. Catalyzes the GTP-dependent ribosomal translocation step during translation elongation. During this step, the ribosome changes from the pre-translocational (PRE) to the post-translocational (POST) state as the newly formed A-site-bound peptidyl-tRNA and P-site-bound deacylated tRNA move to the P and E sites, respectively. Catalyzes the coordinated movement of the two tRNA molecules, the mRNA and conformational changes in the ribosome. The sequence is that of Elongation factor G from Ruegeria sp. (strain TM1040) (Silicibacter sp.).